The following is a 459-amino-acid chain: Light-independent protochlorophyllide reductase subunit N (459 aa).

[4Fe-4S] cluster is bound by residues C22, C47, and C107.

Belongs to the BchN/ChlN family. In terms of assembly, protochlorophyllide reductase is composed of three subunits; ChlL, ChlN and ChlB. Forms a heterotetramer of two ChlB and two ChlN subunits. It depends on [4Fe-4S] cluster as a cofactor.

It is found in the plastid. Its subcellular location is the chloroplast. The catalysed reaction is chlorophyllide a + oxidized 2[4Fe-4S]-[ferredoxin] + 2 ADP + 2 phosphate = protochlorophyllide a + reduced 2[4Fe-4S]-[ferredoxin] + 2 ATP + 2 H2O. The protein operates within porphyrin-containing compound metabolism; chlorophyll biosynthesis (light-independent). Its function is as follows. Component of the dark-operative protochlorophyllide reductase (DPOR) that uses Mg-ATP and reduced ferredoxin to reduce ring D of protochlorophyllide (Pchlide) to form chlorophyllide a (Chlide). This reaction is light-independent. The NB-protein (ChlN-ChlB) is the catalytic component of the complex. The sequence is that of Light-independent protochlorophyllide reductase subunit N from Pinus contorta (Shore pine).